The chain runs to 224 residues: Ribosomal RNA small subunit methyltransferase I (224 aa).

The protein belongs to the methyltransferase superfamily. RsmI family.

The protein resides in the cytoplasm. It catalyses the reaction cytidine(1402) in 16S rRNA + S-adenosyl-L-methionine = 2'-O-methylcytidine(1402) in 16S rRNA + S-adenosyl-L-homocysteine + H(+). Functionally, catalyzes the 2'-O-methylation of the ribose of cytidine 1402 (C1402) in 16S rRNA. The chain is Ribosomal RNA small subunit methyltransferase I from Borrelia garinii subsp. bavariensis (strain ATCC BAA-2496 / DSM 23469 / PBi) (Borreliella bavariensis).